A 346-amino-acid polypeptide reads, in one-letter code: MKFNKISLSVSTALLAAGLAVSGSANAKGRLVVYCSATNILCETTTKAFGEKYDVKTSFIRNGSGSTFAKVEAEKNNPQADVWFGGTFDPQAQAAELGLIEPYKSKHIDEIVERFREPAKTKGHYVSSIYMGILGFGVNTERLAKLGIKEVPKCWKDLTDPRLKGEVQIADPQSAGTAYTALATFVQLWGEKEAFDFLKELHPNVSQYTKSGITPSRNSARGEATIGVGFLHDYALEKRNGAPLELVVPCEGTGYELGGVSILKGARNIDNAKLFVDWALSKEGQELAWKQGDSLQILTNTTAEQSPTAFDPNKLKLINYDFEKYGATEQRKALIEKWVQEVKLAK.

The first 27 residues, 1–27 (MKFNKISLSVSTALLAAGLAVSGSANA), serve as a signal peptide directing secretion.

This is an uncharacterized protein from Haemophilus influenzae (strain ATCC 51907 / DSM 11121 / KW20 / Rd).